We begin with the raw amino-acid sequence, 317 residues long: GTP cyclohydrolase MptA (317 aa).

It belongs to the GTP cyclohydrolase IV family. In terms of assembly, homodimer. Fe(2+) is required as a cofactor.

The catalysed reaction is GTP + H2O = 7,8-dihydroneopterin 2',3'-cyclic phosphate + formate + diphosphate + H(+). It participates in cofactor biosynthesis; 5,6,7,8-tetrahydromethanopterin biosynthesis. In terms of biological role, converts GTP to 7,8-dihydro-D-neopterin 2',3'-cyclic phosphate, the first intermediate in the biosynthesis of coenzyme methanopterin. The protein is GTP cyclohydrolase MptA of Methanococcoides burtonii (strain DSM 6242 / NBRC 107633 / OCM 468 / ACE-M).